We begin with the raw amino-acid sequence, 490 residues long: Betaine aldehyde dehydrogenase (490 aa).

Residues I27 and D93 each contribute to the K(+) site. Residue 150-152 (GAW) coordinates NAD(+). The active-site Charge relay system is the K162. 176–179 (KPSE) serves as a coordination point for NAD(+). K(+) is bound at residue V180. Residue 230–233 (GTTT) participates in NAD(+) binding. L246 contacts K(+). The active-site Proton acceptor is E252. Residues G254, C286, and E387 each coordinate NAD(+). The Nucleophile role is filled by C286. Cysteine sulfenic acid (-SOH) is present on C286. Positions 457 and 460 each coordinate K(+). The Charge relay system role is filled by E464.

The protein belongs to the aldehyde dehydrogenase family. Dimer of dimers. Requires K(+) as cofactor.

The enzyme catalyses betaine aldehyde + NAD(+) + H2O = glycine betaine + NADH + 2 H(+). It functions in the pathway amine and polyamine biosynthesis; betaine biosynthesis via choline pathway; betaine from betaine aldehyde: step 1/1. Its function is as follows. Involved in the biosynthesis of the osmoprotectant glycine betaine. Catalyzes the irreversible oxidation of betaine aldehyde to the corresponding acid. This is Betaine aldehyde dehydrogenase from Pseudomonas entomophila (strain L48).